The sequence spans 171 residues: Co-chaperone protein HscB homolog (171 aa).

The region spanning 2-74 (NYFELFGLPI…LRRAEYLLSL (73 aa)) is the J domain.

Belongs to the HscB family. Interacts with HscA and stimulates its ATPase activity.

Functionally, co-chaperone involved in the maturation of iron-sulfur cluster-containing proteins. Seems to help targeting proteins to be folded toward HscA. The sequence is that of Co-chaperone protein HscB homolog from Vibrio cholerae serotype O1 (strain ATCC 39541 / Classical Ogawa 395 / O395).